Reading from the N-terminus, the 245-residue chain is Probable transcriptional regulatory protein APH_0480 (245 aa).

Belongs to the TACO1 family.

It localises to the cytoplasm. This Anaplasma phagocytophilum (strain HZ) protein is Probable transcriptional regulatory protein APH_0480.